The primary structure comprises 180 residues: Cytidylate kinase (180 aa).

Residue 7–15 participates in ATP binding; the sequence is GLPGSGTTT.

Belongs to the cytidylate kinase family. Type 2 subfamily.

The protein localises to the cytoplasm. The catalysed reaction is CMP + ATP = CDP + ADP. The enzyme catalyses dCMP + ATP = dCDP + ADP. This chain is Cytidylate kinase, found in Methanosarcina barkeri (strain Fusaro / DSM 804).